Consider the following 382-residue polypeptide: Homoserine O-acetyltransferase (382 aa).

Positions 52 to 356 constitute an AB hydrolase-1 domain; it reads NVVMVLHALT…TYGHDGFLVE (305 aa). Catalysis depends on Ser-157, which acts as the Nucleophile. Position 227 (Arg-227) interacts with substrate. Residues Asp-320 and His-350 contribute to the active site. Asp-351 is a substrate binding site.

This sequence belongs to the AB hydrolase superfamily. MetX family. As to quaternary structure, homodimer.

The protein localises to the cytoplasm. The catalysed reaction is L-homoserine + acetyl-CoA = O-acetyl-L-homoserine + CoA. The protein operates within amino-acid biosynthesis; L-methionine biosynthesis via de novo pathway; O-acetyl-L-homoserine from L-homoserine: step 1/1. Transfers an acetyl group from acetyl-CoA to L-homoserine, forming acetyl-L-homoserine. The chain is Homoserine O-acetyltransferase from Mycobacterium leprae (strain TN).